The chain runs to 241 residues: 2,3,4,5-tetrahydropyridine-2,6-dicarboxylate N-acetyltransferase (241 aa).

It belongs to the transferase hexapeptide repeat family. DapH subfamily.

It carries out the reaction (S)-2,3,4,5-tetrahydrodipicolinate + acetyl-CoA + H2O = L-2-acetamido-6-oxoheptanedioate + CoA. It participates in amino-acid biosynthesis; L-lysine biosynthesis via DAP pathway; LL-2,6-diaminopimelate from (S)-tetrahydrodipicolinate (acetylase route): step 1/3. Functionally, catalyzes the transfer of an acetyl group from acetyl-CoA to tetrahydrodipicolinate. This chain is 2,3,4,5-tetrahydropyridine-2,6-dicarboxylate N-acetyltransferase, found in Thermoanaerobacter pseudethanolicus (strain ATCC 33223 / 39E) (Clostridium thermohydrosulfuricum).